Consider the following 1037-residue polypeptide: Ribonuclease E (1037 aa).

Disordered stretches follow at residues 1–23 (MAED…LPER), 47–90 (FDGR…ETPV), and 106–369 (VSEA…PILS). A compositionally biased stretch (basic and acidic residues) spans 47–67 (FDGRQRSAHSTVDKADAERVR). Composition is skewed to low complexity over residues 68–90 (AALT…ETPV) and 106–126 (VSEA…PAAE). 2 stretches are compositionally biased toward acidic residues: residues 127 to 141 (AEAE…EAET) and 196 to 226 (VVDD…DDDQ). The span at 230-242 (PRRRRRGRRGRGR) shows a compositional bias: basic residues. Over residues 248-284 (NDDATSDADTDSTEDQTDGDEQESGEDSDDSGDEDST) the composition is skewed to acidic residues. A compositionally biased stretch (basic residues) spans 291-301 (RRRRRRRRRKS). The span at 320 to 335 (VHERAPRTERSDKSDD) shows a compositional bias: basic and acidic residues. Residues 427 to 504 (GNIYLGIVQN…GHKGARLTTQ (78 aa)) enclose the S1 motif domain. Residues 561–589 (EDIRSDVERLQKRWSEIEAKAAEVTEKKA) are a coiled coil. The Mg(2+) site is built by aspartate 694 and aspartate 738. Cysteine 796 and cysteine 799 together coordinate Zn(2+). A disordered region spans residues 810 to 1037 (PIDSASSNGG…ARPAGPPSHD (228 aa)). The segment covering 834–843 (RRGKRGKKGA) has biased composition (basic residues). Over residues 844 to 864 (ARTEEVHVAKVPDHTPGEHPM) the composition is skewed to basic and acidic residues. Positions 879-891 (EDHEDHEDHETAE) are enriched in acidic residues. A compositionally biased stretch (basic and acidic residues) spans 897 to 913 (EVRDDTRDEHDADERAH). Positions 923–1006 (GDEDLDDSDE…DSDSDEDEEP (84 aa)) are enriched in acidic residues.

It belongs to the RNase E/G family. Assembles into a homotetramer formed by a dimer of dimers. Interacts with DNA-binding protein HhupB. It depends on Mg(2+) as a cofactor. Requires Zn(2+) as cofactor.

It localises to the cytoplasm. The enzyme catalyses Endonucleolytic cleavage of single-stranded RNA in A- and U-rich regions.. Endoribonuclease that plays a central role in RNA processing and decay. Plays a major role in pre-16S rRNA maturation, probably generating the mature 5'-end, and a minor role in pre-5S and pre-23S rRNA maturation. Probably also processes tRNA. RNase E and HupB jointly contribute to cellular adaptation to changing growth conditions and survival during antibiotic treatment. Overexpression or depletion leads to changes in gene expression; overexpression induces metabolic slowdown and cell stress while depleted strains grow less well than induced strains. The protein is Ribonuclease E (rne) of Mycolicibacterium smegmatis (strain ATCC 700084 / mc(2)155) (Mycobacterium smegmatis).